Reading from the N-terminus, the 194-residue chain is Imidazoleglycerol-phosphate dehydratase (194 aa).

This sequence belongs to the imidazoleglycerol-phosphate dehydratase family.

Its subcellular location is the cytoplasm. The catalysed reaction is D-erythro-1-(imidazol-4-yl)glycerol 3-phosphate = 3-(imidazol-4-yl)-2-oxopropyl phosphate + H2O. It participates in amino-acid biosynthesis; L-histidine biosynthesis; L-histidine from 5-phospho-alpha-D-ribose 1-diphosphate: step 6/9. This chain is Imidazoleglycerol-phosphate dehydratase, found in Bacillus cereus (strain AH820).